The sequence spans 236 residues: uncharacterized protein (236 aa).

7 consecutive transmembrane segments (helical) span residues 32-52 (MALALLLTGVAAITTISVEPI), 61-81 (FGTIIMFAPLGIALYFFMGFG), 90-110 (ILFWVYAGLTGMSLSYLALIY), 115-135 (IARTFFICSSVFGAMSLYGYS), 144-164 (GSFFAMGLIGLIIASLVNLFL), 167-187 (SSLSFATSLIGIVVFMGLIAW), and 208-228 (LSIMAAFTLYLDFINLFLYLM).

The protein belongs to the BI1 family.

The protein localises to the cell membrane. This is an uncharacterized protein from Rickettsia prowazekii (strain Madrid E).